Here is a 432-residue protein sequence, read N- to C-terminus: uncharacterized protein (432 aa).

This is an uncharacterized protein from Methanocaldococcus jannaschii (strain ATCC 43067 / DSM 2661 / JAL-1 / JCM 10045 / NBRC 100440) (Methanococcus jannaschii).